The chain runs to 387 residues: DNA double-strand break repair protein Mre11 (387 aa).

The Mn(2+) site is built by aspartate 9, histidine 11, aspartate 50, and asparagine 85. Histidine 86 functions as the Proton donor in the catalytic mechanism. The Mn(2+) site is built by histidine 150, aspartate 181, and histidine 183. Residues 365 to 387 (AVLDDDADAADDDGRPTTVEEFQ) are disordered. Residues 366-375 (VLDDDADAAD) show a composition bias toward acidic residues.

The protein belongs to the MRE11/RAD32 family. Homodimer. Forms a heterotetramer composed of two Mre11 subunits and two Rad50 subunits. Mn(2+) is required as a cofactor.

With respect to regulation, nuclease activity is regulated by Rad50. Part of the Rad50/Mre11 complex, which is involved in the early steps of DNA double-strand break (DSB) repair. Mre11 binds to DSB ends and has both double-stranded 3'-5' exonuclease activity and single-stranded endonuclease activity. The chain is DNA double-strand break repair protein Mre11 from Halobacterium salinarum (strain ATCC 700922 / JCM 11081 / NRC-1) (Halobacterium halobium).